The sequence spans 395 residues: 8-amino-7-oxononanoate synthase (395 aa).

Substrate is bound at residue Arg24. A pyridoxal 5'-phosphate-binding site is contributed by 111-112 (GF). His136 contacts substrate. Residues Ser184, 209 to 212 (DDAH), and 240 to 243 (TLSK) contribute to the pyridoxal 5'-phosphate site. At Lys243 the chain carries N6-(pyridoxal phosphate)lysine. Thr357 provides a ligand contact to substrate.

It belongs to the class-II pyridoxal-phosphate-dependent aminotransferase family. BioF subfamily. In terms of assembly, homodimer. Requires pyridoxal 5'-phosphate as cofactor.

It catalyses the reaction 6-carboxyhexanoyl-[ACP] + L-alanine + H(+) = (8S)-8-amino-7-oxononanoate + holo-[ACP] + CO2. The protein operates within cofactor biosynthesis; biotin biosynthesis. Functionally, catalyzes the decarboxylative condensation of pimeloyl-[acyl-carrier protein] and L-alanine to produce 8-amino-7-oxononanoate (AON), [acyl-carrier protein], and carbon dioxide. The polypeptide is 8-amino-7-oxononanoate synthase (Alkaliphilus oremlandii (strain OhILAs) (Clostridium oremlandii (strain OhILAs))).